The following is a 151-amino-acid chain: SsrA-binding protein (151 aa).

The tract at residues 121–151 is disordered; the sequence is GKKLHDKRDTEKDREWQREKQRVMKNQRGAA. Positions 126–142 are enriched in basic and acidic residues; that stretch reads DKRDTEKDREWQREKQR.

It belongs to the SmpB family.

The protein localises to the cytoplasm. Functionally, required for rescue of stalled ribosomes mediated by trans-translation. Binds to transfer-messenger RNA (tmRNA), required for stable association of tmRNA with ribosomes. tmRNA and SmpB together mimic tRNA shape, replacing the anticodon stem-loop with SmpB. tmRNA is encoded by the ssrA gene; the 2 termini fold to resemble tRNA(Ala) and it encodes a 'tag peptide', a short internal open reading frame. During trans-translation Ala-aminoacylated tmRNA acts like a tRNA, entering the A-site of stalled ribosomes, displacing the stalled mRNA. The ribosome then switches to translate the ORF on the tmRNA; the nascent peptide is terminated with the 'tag peptide' encoded by the tmRNA and targeted for degradation. The ribosome is freed to recommence translation, which seems to be the essential function of trans-translation. The chain is SsrA-binding protein from Chromobacterium violaceum (strain ATCC 12472 / DSM 30191 / JCM 1249 / CCUG 213 / NBRC 12614 / NCIMB 9131 / NCTC 9757 / MK).